The following is a 443-amino-acid chain: Phosphoglucosamine mutase (443 aa).

Residue serine 101 is the Phosphoserine intermediate of the active site. 4 residues coordinate Mg(2+): serine 101, aspartate 239, aspartate 241, and aspartate 243. Residue serine 101 is modified to Phosphoserine.

This sequence belongs to the phosphohexose mutase family. The cofactor is Mg(2+). In terms of processing, activated by phosphorylation.

The catalysed reaction is alpha-D-glucosamine 1-phosphate = D-glucosamine 6-phosphate. Functionally, catalyzes the conversion of glucosamine-6-phosphate to glucosamine-1-phosphate. The polypeptide is Phosphoglucosamine mutase (Francisella philomiragia subsp. philomiragia (strain ATCC 25017 / CCUG 19701 / FSC 153 / O#319-036)).